Reading from the N-terminus, the 282-residue chain is Aquaporin-6 (282 aa).

Over 1 to 25 (MDAVEPGGRGWASMLACRLWKAISR) the chain is Cytoplasmic. A helical transmembrane segment spans residues 26–46 (ALFAEFLATGLYVFFGVGSVM). The Extracellular segment spans residues 47-54 (RWPTALPS). The helical transmembrane segment at 55 to 73 (VLQIAITFNLVTAMAVQVT) threads the bilayer. Over 74 to 78 (WKASG) the chain is Cytoplasmic. An intramembrane region (discontinuously helical) is located at residues 79–88 (AHANPAVTLA). The short motif at 82-84 (NPA) is the NPA 1 element. The Cytoplasmic segment spans residues 89-99 (FLVGSHISLPR). The helical transmembrane segment at 100–121 (AVAYVAAQLVGATVGAALLYGV) threads the bilayer. At 122–141 (MPGDIRETLGINVVRNSVST) the chain is on the extracellular side. Residues 142–162 (GQAVAVELLLTLQLVLCVFAS) traverse the membrane as a helical segment. The Cytoplasmic segment spans residues 163–168 (TDSRQT). A helical membrane pass occupies residues 169 to 188 (SGSPATMIGISVALGHLIGI). Over 189 to 192 (HFTG) the chain is Extracellular. The segment at residues 193-205 (CSMNPARSFGPAI) is an intramembrane region (discontinuously helical). Positions 196-198 (NPA) match the NPA 2 motif. Over 206 to 213 (IIGKFTVH) the chain is Extracellular. A helical membrane pass occupies residues 214–234 (WVFWVGPLMGALLASLIYNFV). At 235–282 (LFPDTKTLAQRLAILTGTVEVGTGAGAGAEPLKKESQPGSGAVEMESV) the chain is on the cytoplasmic side. The disordered stretch occupies residues 260-282 (GAGAEPLKKESQPGSGAVEMESV).

Belongs to the MIP/aquaporin (TC 1.A.8) family. In terms of assembly, homotetramer; each monomer provides an independent solute pore.

It localises to the cytoplasmic vesicle membrane. It carries out the reaction nitrate(in) = nitrate(out). The catalysed reaction is iodide(out) = iodide(in). The enzyme catalyses bromide(in) = bromide(out). It catalyses the reaction chloride(in) = chloride(out). It carries out the reaction Na(+)(in) = Na(+)(out). The catalysed reaction is H2O(in) = H2O(out). The enzyme catalyses CO2(out) = CO2(in). It catalyses the reaction NH4(+)(in) = NH4(+)(out). In terms of biological role, aquaporins form homotetrameric transmembrane channels, with each monomer independently mediating water transport across the plasma membrane along its osmotic gradient. Unlike classical aquaporins, AQP6 is an intracellular channel with selective anion permeability, particularly for nitrate, and exhibits very low water permeability. It may also facilitate the transport of gases, such as CO2 and NH4(+), as demonstrated in vitro. The polypeptide is Aquaporin-6 (Homo sapiens (Human)).